The primary structure comprises 141 residues: Large ribosomal subunit protein uL11c (141 aa).

The protein belongs to the universal ribosomal protein uL11 family. As to quaternary structure, part of the ribosomal stalk of the 50S ribosomal subunit. Interacts with L10 and the large rRNA to form the base of the stalk. L10 forms an elongated spine to which L12 dimers bind in a sequential fashion forming a multimeric L10(L12)X complex.

It localises to the plastid. It is found in the chloroplast. In terms of biological role, forms part of the ribosomal stalk which helps the ribosome interact with GTP-bound translation factors. In Pyropia yezoensis (Susabi-nori), this protein is Large ribosomal subunit protein uL11c.